Consider the following 31-residue polypeptide: MFTVISYLSLLFISFLFALTLFIVLNKIELI.

A helical transmembrane segment spans residues 4–24 (VISYLSLLFISFLFALTLFIV).

Belongs to the PetL family. As to quaternary structure, the 4 large subunits of the cytochrome b6-f complex are cytochrome b6, subunit IV (17 kDa polypeptide, PetD), cytochrome f and the Rieske protein, while the 4 small subunits are PetG, PetL, PetM and PetN. The complex functions as a dimer.

Its subcellular location is the plastid. It is found in the chloroplast thylakoid membrane. Functionally, component of the cytochrome b6-f complex, which mediates electron transfer between photosystem II (PSII) and photosystem I (PSI), cyclic electron flow around PSI, and state transitions. PetL is important for photoautotrophic growth as well as for electron transfer efficiency and stability of the cytochrome b6-f complex. The sequence is that of Cytochrome b6-f complex subunit 6 from Chara vulgaris (Common stonewort).